The sequence spans 149 residues: Urease accessory protein UreE (149 aa).

It belongs to the UreE family.

The protein localises to the cytoplasm. Its function is as follows. Involved in urease metallocenter assembly. Binds nickel. Probably functions as a nickel donor during metallocenter assembly. This is Urease accessory protein UreE from Corynebacterium efficiens (strain DSM 44549 / YS-314 / AJ 12310 / JCM 11189 / NBRC 100395).